The sequence spans 213 residues: MGVHKLEPKDHLKPQNLEGISNEQIEPHFEAHYKGYVAKYNEIQEKLADQNFADRSKANQNYSEYRELKVEETFNYMGVVLHELYFGMLTPGGKGEPSEALKKKIEEDIGGLDACTNELKAAAMAFRGWAILGLDIFSGRLVVNGLDAHNVYNLTGLIPLIVIDTYEHAYYVDYKNKRPPYIDAFFKNINWDVVNERFEKAMKAYEALKDFIK.

The Fe cation site is built by histidine 28, histidine 82, aspartate 164, and histidine 168.

Belongs to the iron/manganese superoxide dismutase family. In terms of assembly, homotetramer. Requires Fe cation as cofactor.

It catalyses the reaction 2 superoxide + 2 H(+) = H2O2 + O2. In terms of biological role, destroys superoxide anion radicals which are normally produced within the cells and which are toxic to biological systems. In Aquifex pyrophilus, this protein is Superoxide dismutase [Fe] (sodB).